The sequence spans 1666 residues: Cortactin-binding protein 2 (1666 aa).

Disordered stretches follow at residues 1-25 (MATDGASCEPDFARAPEDAAGAPAE), 202-224 (EKKRASGLEEELSGEKRRSAEME), 366-411 (IVSS…PAIQ), 457-481 (NANNDQDQNGNNTQSPPSRDVSPTS), and 501-619 (RFTS…PKPS). Residues 120-274 (KMQERMSTQL…MTEQLKRGND (155 aa)) adopt a coiled-coil conformation. Composition is skewed to low complexity over residues 385-398 (GPSTSSGPDTPSST) and 457-468 (NANNDQDQNGNN). Positions 469–481 (TQSPPSRDVSPTS) are enriched in polar residues. Arginine 501 is subject to Asymmetric dimethylarginine. 6 ANK repeats span residues 712-742 (GRPTLLQQAAAQGNVTLLSMLLNEEGLDINH), 746-775 (DGHSALYSAAKNGHTDCVRLLLNAEAQVNA), 779-808 (DGFTPVCAAAAQGHVKCVELLVAYHANINH), 812-841 (EGQTPLYLACKNGNKECIKLLLEAGTDRSV), 845-874 (DGWTPVHAAVDTGSVDGLKLLLYHRAPACG), and 915-945 (EGWTAAHIAASKGFKNCLKILCRHGGLEPER). A Phosphoserine modification is found at serine 1527. Positions 1545–1566 (SESDISKIADTRDDLRRFDSSR) are enriched in basic and acidic residues. Disordered stretches follow at residues 1545-1601 (SESD…RSNR) and 1620-1666 (RSKI…KPNQ). The segment covering 1585-1594 (KEVSPLSSHQ) has biased composition (polar residues). A compositionally biased stretch (low complexity) spans 1627–1641 (SQNTKRSSSSSNTRQ). Basic and acidic residues predominate over residues 1648–1666 (SKDEIWNLRNNEQIEKPNQ).

In terms of assembly, interacts with CTTN/cortactin SH3 domain. Interacts with STRN, STRN4/zinedin and MOB4/phocein; this interactions mediate the association with the STRIPAK core complex and may regulate dendritic spine distribution of the STRIPAK complex in hippocampal neurons. Activation of glutamate receptors weakens the interaction with STRN and STRN4.

The protein resides in the cytoplasm. It is found in the cell cortex. The protein localises to the cell projection. It localises to the dendritic spine. Its function is as follows. Regulates the dendritic spine distribution of CTTN/cortactin in hippocampal neurons, and thus controls dendritic spinogenesis and dendritic spine maintenance. Associates with the striatin-interacting phosphatase and kinase (STRIPAK) core complex to regulate dendritic spine distribution of the STRIPAK complex in hippocampal neurons. The protein is Cortactin-binding protein 2 (CTTNBP2) of Echinops telfairi (Lesser hedgehog tenrec).